The following is a 125-amino-acid chain: Meiotically up-regulated gene 112 protein (125 aa).

It localises to the golgi apparatus. Its function is as follows. Has a role in meiosis. This Schizosaccharomyces pombe (strain 972 / ATCC 24843) (Fission yeast) protein is Meiotically up-regulated gene 112 protein (mug112).